The following is a 1252-amino-acid chain: Plasma membrane calcium-transporting ATPase mca-1 (1252 aa).

At 1–121 the chain is on the cytoplasmic side; it reads MQKSQNVTAV…VRLVLDACKD (121 aa). A helical transmembrane segment spans residues 122 to 142; that stretch reads PTLVILVLSGFINLALSFYEP. Over 143–180 the chain is Extracellular; sequence TSAAEDATQHLVNATTAAILANGTFMSTTEAPSEGHGT. Residues Asn155 and Asn164 are each glycosylated (N-linked (GlcNAc...) asparagine). The chain crosses the membrane as a helical span at residues 181–201; sequence AWIEGVAILLCVIVVVLVTAV. At 202–376 the chain is on the cytoplasmic side; sequence NDYSKERQFR…KSVLQAKLSK (175 aa). A disordered region spans residues 330-361; sequence DDSTSTSSSSSSSSSSSGSSSNGSSDSSKSGD. The segment covering 333–357 has biased composition (low complexity); it reads TSTSSSSSSSSSSSGSSSNGSSDSS. The helical transmembrane segment at 377-397 threads the bilayer; the sequence is LALQIIYCGTTIAIIALIVLV. Topologically, residues 398 to 422 are extracellular; that stretch reads TRFCLDHYVFEKNEFSLVDIQMFVK. A helical transmembrane segment spans residues 423 to 443; that stretch reads FFIIAVTILVISIPEGLPLAI. Residues Val432, Ile435, and Glu437 each coordinate Ca(2+). The Cytoplasmic portion of the chain corresponds to 444 to 879; it reads ALALTYSVRK…GRNVYDSISK (436 aa). Asp479 serves as the catalytic 4-aspartylphosphate intermediate. 2 residues coordinate Mg(2+): Asp479 and Thr481. Residues Thr481, Glu553, Lys612, Thr733, Gly734, Asp735, Arg792, and Lys798 each coordinate ATP. Mg(2+) is bound at residue Asp822. An ATP-binding site is contributed by Asn825. The helical transmembrane segment at 880–900 threads the bilayer; it reads FLQFQLTVNVVAVITAFVGAV. Asn888 contributes to the Ca(2+) binding site. The Extracellular portion of the chain corresponds to 901 to 908; the sequence is TVSDSPLK. A helical transmembrane segment spans residues 909–929; it reads AVHMLWINLIMDTLASLALAT. The Ca(2+) site is built by Asn916 and Asp920. Residues 930-960 lie on the Cytoplasmic side of the membrane; sequence EQPTDELLERKPYGRKKSLISRTMVKNILCH. The chain crosses the membrane as a helical span at residues 961–981; the sequence is ALYQLIIIFVIFFYGDTIFGI. Over 982-989 the chain is Extracellular; it reads KTGLYAPL. A helical transmembrane segment spans residues 990–1010; sequence FAPPSQHFTLVFNAFVMMTVF. The Cytoplasmic segment spans residues 1011–1035; sequence NEINARKVHGERNVFKGLASNRVFC. The chain crosses the membrane as a helical span at residues 1036–1056; sequence VIWVTTFIAQIIIVQFGGAWF. Residues 1057–1065 are Extracellular-facing; sequence STAPLTLQQ. A helical membrane pass occupies residues 1066–1086; sequence WIVCLVLGFSTLIWGQIVATI. Residues 1087–1252 are Cytoplasmic-facing; sequence PSKKLPKAWK…NVDMEDIELN (166 aa). Residues 1124–1142 form a calmodulin-binding subdomain A region; sequence LRRSGKSLWVRGMFIIGNH. The interval 1143-1152 is calmodulin-binding subdomain B; the sequence is LRVLRAFGME. The segment at 1181-1252 is disordered; that stretch reads YRHQKHQEKK…NVDMEDIELN (72 aa).

It belongs to the cation transport ATPase (P-type) (TC 3.A.3) family. Type IIB subfamily. Interacts with calmodulin.

It localises to the cell membrane. It catalyses the reaction Ca(2+)(in) + ATP + H2O = Ca(2+)(out) + ADP + phosphate + H(+). In terms of biological role, catalyzes the hydrolysis of ATP coupled with the transport of calcium across a membrane. In Caenorhabditis elegans, this protein is Plasma membrane calcium-transporting ATPase mca-1.